The chain runs to 413 residues: Gamma-glutamyl phosphate reductase (413 aa).

This sequence belongs to the gamma-glutamyl phosphate reductase family.

It is found in the cytoplasm. It carries out the reaction L-glutamate 5-semialdehyde + phosphate + NADP(+) = L-glutamyl 5-phosphate + NADPH + H(+). Its pathway is amino-acid biosynthesis; L-proline biosynthesis; L-glutamate 5-semialdehyde from L-glutamate: step 2/2. Catalyzes the NADPH-dependent reduction of L-glutamate 5-phosphate into L-glutamate 5-semialdehyde and phosphate. The product spontaneously undergoes cyclization to form 1-pyrroline-5-carboxylate. The sequence is that of Gamma-glutamyl phosphate reductase from Anoxybacillus flavithermus (strain DSM 21510 / WK1).